A 141-amino-acid chain; its full sequence is Nucleoside triphosphatase NudI (141 aa).

The Nudix hydrolase domain maps to 1–141 (MRQRTIVCPL…RHTLALKGLL (141 aa)). Residues 38-59 (GGVEPGERIEEALRREIREELG) carry the Nudix box motif.

This sequence belongs to the Nudix hydrolase family. NudI subfamily. Monomer. The cofactor is Mg(2+).

The enzyme catalyses a ribonucleoside 5'-triphosphate + H2O = a ribonucleoside 5'-phosphate + diphosphate + H(+). The catalysed reaction is a 2'-deoxyribonucleoside 5'-triphosphate + H2O = a 2'-deoxyribonucleoside 5'-phosphate + diphosphate + H(+). It catalyses the reaction dUTP + H2O = dUMP + diphosphate + H(+). It carries out the reaction dTTP + H2O = dTMP + diphosphate + H(+). The enzyme catalyses dCTP + H2O = dCMP + diphosphate + H(+). Its function is as follows. Catalyzes the hydrolysis of nucleoside triphosphates, with a preference for pyrimidine deoxynucleoside triphosphates (dUTP, dTTP and dCTP). The polypeptide is Nucleoside triphosphatase NudI (Salmonella newport (strain SL254)).